The primary structure comprises 323 residues: Cell division protein ZipA (323 aa).

Residues 1 to 4 are Periplasmic-facing; it reads MDLN. The chain crosses the membrane as a helical span at residues 5–25; it reads TILIILGIIALIILVVHGLWA. Residues 26 to 323 are Cytoplasmic-facing; it reads NRREKSQYFK…AEKAYLDKVR (298 aa). The disordered stretch occupies residues 44–73; it reads SRLREPPAHIQSASEEKKDANTSTPTAEVS.

This sequence belongs to the ZipA family. In terms of assembly, interacts with FtsZ via their C-terminal domains.

The protein resides in the cell inner membrane. Its function is as follows. Essential cell division protein that stabilizes the FtsZ protofilaments by cross-linking them and that serves as a cytoplasmic membrane anchor for the Z ring. Also required for the recruitment to the septal ring of downstream cell division proteins. This is Cell division protein ZipA from Pasteurella multocida (strain Pm70).